A 1082-amino-acid polypeptide reads, in one-letter code: Error-prone DNA polymerase (1082 aa).

Belongs to the DNA polymerase type-C family. DnaE2 subfamily.

The protein resides in the cytoplasm. The enzyme catalyses DNA(n) + a 2'-deoxyribonucleoside 5'-triphosphate = DNA(n+1) + diphosphate. DNA polymerase involved in damage-induced mutagenesis and translesion synthesis (TLS). It is not the major replicative DNA polymerase. The sequence is that of Error-prone DNA polymerase from Xanthomonas campestris pv. campestris (strain 8004).